A 401-amino-acid chain; its full sequence is Glycerol-3-phosphate dehydrogenase [NAD(+)] 1 (401 aa).

NAD(+) is bound by residues 40–45 (GSGNWG), Phe-128, Lys-151, and Ala-184. Lys-151 is a binding site for substrate. Lys-244 acts as the Proton acceptor in catalysis. NAD(+)-binding residues include Arg-309 and Gln-338. Position 309–310 (309–310 (RN)) interacts with substrate.

Belongs to the NAD-dependent glycerol-3-phosphate dehydrogenase family.

The protein localises to the cytoplasm. It carries out the reaction sn-glycerol 3-phosphate + NAD(+) = dihydroxyacetone phosphate + NADH + H(+). The chain is Glycerol-3-phosphate dehydrogenase [NAD(+)] 1 (GPD1) from Zygosaccharomyces rouxii.